The primary structure comprises 248 residues: Isoprenyl transferase (248 aa).

The active site involves Asp-23. Asp-23 is a Mg(2+) binding site. Substrate is bound by residues 24–27, Trp-28, Arg-36, His-40, and 68–70; these read GNGR and STE. The active-site Proton acceptor is the Asn-71. Residues Trp-72, Arg-74, Arg-185, and 191-193 contribute to the substrate site; that span reads RIS. Glu-204 serves as a coordination point for Mg(2+).

Belongs to the UPP synthase family. As to quaternary structure, homodimer. The cofactor is Mg(2+).

Its function is as follows. Catalyzes the condensation of isopentenyl diphosphate (IPP) with allylic pyrophosphates generating different type of terpenoids. The sequence is that of Isoprenyl transferase from Neisseria meningitidis serogroup A / serotype 4A (strain DSM 15465 / Z2491).